The primary structure comprises 362 residues: MTTLMGSYSWTEGLDCSPIDEDLSDGLSPHRSPREKGSETRIRRPMNAFMVWAKDERKRLAVQNPDLHNAELSKMLGKSWKALSPAQKRPYVEEAERLRVQHMQDYPNYKYRPRRKKQIKRICKRVDTGFLLSSLSRDQNSVPDTRGCRTAVEKEENGGYPGSALPDMRHYRETPSNGSKHDQTYPYGLPTPPEMSPLEAIDQDQSFYSTPCSEDCHPHINGAVYEYSSRSPILCSHLSQVPIPQTGSSMIPPVPNCPPAYYSSTYHSIHHNYHAHLGQLSPPPEHPHYDAIDQISQAELLGDMDRNEFDQYLNTSLHDPSEMTIHGHVQVSQASDIQPSETSLISVLADATATYYNSYSVS.

Positions 21-41 (EDLSDGLSPHRSPREKGSETR) are disordered. The span at 32-41 (SPREKGSETR) shows a compositional bias: basic and acidic residues. The segment at residues 42-110 (IRRPMNAFMV…QHMQDYPNYK (69 aa)) is a DNA-binding region (HMG box). One can recognise a Sox C-terminal domain in the interval 245-362 (QTGSSMIPPV…ATYYNSYSVS (118 aa)).

Expressed in the embryonic pronephric sinus as well as posterior cardinal veins.

The protein localises to the nucleus. In terms of biological role, transcription factor. Binds to the DNA sequence 5'-AACAAT-3'. Acts downstream of vegt and upstream of nodal signaling to promote endodermal and mesodermal differentiation by promoting vegt-induced expression of both endodermal genes (including endodermin) and mesodermal genes (including snai1/snail and snai2/slug). Induces expression of multiple nodal genes (including nodal, nodal2, nodal4, nodal5 and nodal6) and binds directly to sites within the promoter of the nodal5 gene. The endodermal and mesodermal specification pathways then interact to initiate cardiogenesis. Acts partially redundantly with sox18 during cardiogenesis. Also acts as an antagonist of beta-catenin signaling. Regulates (possibly indirectly) development of the pronephros, the functional larval kidney. This chain is Transcription factor Sox-7, found in Xenopus tropicalis (Western clawed frog).